A 656-amino-acid polypeptide reads, in one-letter code: Chaperone protein DnaK (656 aa).

Residues 590-605 (GGAAGGAAGGAAGGAA) are compositionally biased toward gly residues. Residues 590-656 (GGAAGGAAGG…DGQPKPGPAA (67 aa)) are disordered. Over residues 606–621 (GDAAGAAGDSTGDAAG) the composition is skewed to low complexity. Residues 622–635 (AAGGPSEGPAGDAG) are compositionally biased toward gly residues.

This sequence belongs to the heat shock protein 70 family.

Functionally, acts as a chaperone. This chain is Chaperone protein DnaK, found in Cenarchaeum symbiosum (strain A).